The chain runs to 298 residues: Zinc finger protein-like 1 homolog (298 aa).

The B box-type; degenerate zinc-finger motif lies at 1-43 (MGLCKCPKRLVTNQFCFEHRVNVCEHCMVQSHPKCIVQSYLQW). The RING-type; atypical zinc finger occupies 53–101 (CTLCGTTLEQGDCVRLVCYHVFHWDCLNARQAALPANTAPRGHQCPACT). The tract at residues 199–230 (AGDYASSRRPLLPRQSPIGGTDRDDNKYQRRT) is disordered. Ser214 carries the phosphoserine modification. A helical transmembrane segment spans residues 255–275 (WFLVTAGILAFVLFVYLMAWL).

This sequence belongs to the ZFPL1 family.

It localises to the membrane. The polypeptide is Zinc finger protein-like 1 homolog (Drosophila erecta (Fruit fly)).